Here is a 123-residue protein sequence, read N- to C-terminus: Steroid Delta-isomerase (123 aa).

Catalysis depends on Tyr-12, which acts as the Proton donor. Asp-36 serves as the catalytic Proton acceptor. Substrate is bound at residue Asp-96.

In terms of assembly, homodimer.

The enzyme catalyses a 3-oxo-Delta(5)-steroid = a 3-oxo-Delta(4)-steroid. This is Steroid Delta-isomerase (ksdI) from Nocardioides simplex (Arthrobacter simplex).